A 313-amino-acid chain; its full sequence is Porphobilinogen deaminase (313 aa).

At C242 the chain carries S-(dipyrrolylmethanemethyl)cysteine.

This sequence belongs to the HMBS family. Monomer. The cofactor is dipyrromethane.

It catalyses the reaction 4 porphobilinogen + H2O = hydroxymethylbilane + 4 NH4(+). It functions in the pathway porphyrin-containing compound metabolism; protoporphyrin-IX biosynthesis; coproporphyrinogen-III from 5-aminolevulinate: step 2/4. Its function is as follows. Tetrapolymerization of the monopyrrole PBG into the hydroxymethylbilane pre-uroporphyrinogen in several discrete steps. This is Porphobilinogen deaminase from Pseudomonas putida (strain W619).